Consider the following 270-residue polypeptide: Putative phosphoenolpyruvate synthase regulatory protein (270 aa).

Glycine 150–threonine 157 lines the ADP pocket.

Belongs to the pyruvate, phosphate/water dikinase regulatory protein family. PSRP subfamily.

It catalyses the reaction [pyruvate, water dikinase] + ADP = [pyruvate, water dikinase]-phosphate + AMP + H(+). The catalysed reaction is [pyruvate, water dikinase]-phosphate + phosphate + H(+) = [pyruvate, water dikinase] + diphosphate. Its function is as follows. Bifunctional serine/threonine kinase and phosphorylase involved in the regulation of the phosphoenolpyruvate synthase (PEPS) by catalyzing its phosphorylation/dephosphorylation. This Shewanella frigidimarina (strain NCIMB 400) protein is Putative phosphoenolpyruvate synthase regulatory protein.